The primary structure comprises 489 residues: Calcium uptake protein 1, mitochondrial (489 aa).

Residues 1 to 34 (MYRLRALTAATVGMVQLTRRHHTGAFRSYQRRRL) constitute a mitochondrion transit peptide. Residues 62–109 (SSVKHEEQMREEEPLKDVAEEAESDGALESSSGEDEDEAGSEEKKKKQ) are disordered. The segment covering 64-80 (VKHEEQMREEEPLKDVA) has biased composition (basic and acidic residues). Residues 81–101 (EEAESDGALESSSGEDEDEAG) show a composition bias toward acidic residues. Residues 106-117 (KKKQRIGFRDRK) are polybasic region. The segment at 133 to 136 (KIFR) is k/R-ring. One can recognise an EF-hand 1 domain in the interval 229–264 (TPQRNFEIAFKMFDLNGDGEVDLEEFEQVQSIIRSQ). D242, N244, D246, E248, and E253 together coordinate Ca(2+). A k/R-ring region spans residues 270–274 (RHRDR). EF-hand domains lie at 371 to 386 (ITFE…LKNV) and 420 to 455 (LSDH…RLMR). Positions 433, 435, 437, 439, and 444 each coordinate Ca(2+). The tract at residues 467 to 477 (RLVRAMWKCAQ) is C-helix region.

Belongs to the MICU1 family. MICU1 subfamily. As to quaternary structure, heterodimer; disulfide-linked; heterodimerizes with micu2. Component of the uniplex complex.

The protein localises to the mitochondrion intermembrane space. Its subcellular location is the mitochondrion inner membrane. Calcium sensor of the mitochondrial calcium uniporter (mcu) channel, which senses calcium level via its EF-hand domains. micu1 and micu2 form a disulfide-linked heterodimer that stimulates and inhibits MCU activity, depending on the concentration of calcium. At low calcium levels, micu1 occludes the pore of the MCU channel, preventing mitochondrial calcium uptake. At higher calcium levels, calcium-binding to micu1 and micu2 induces a conformational change that weakens mcu-micu1 interactions and moves the micu1-micu2 heterodimer away from the pore, allowing calcium permeation through the mcu channel. Also required to protect against manganese toxicity by preventing manganese uptake by mcu. This is Calcium uptake protein 1, mitochondrial (micu1) from Danio rerio (Zebrafish).